Reading from the N-terminus, the 555-residue chain is Transmembrane protein 87A (555 aa).

A signal peptide spans 1–21 (MAVAAWLQVSPVIFLLLGAQP). Over 22–225 (FPLSFLGAGP…YEYLTLEDYP (204 aa)) the chain is Lumenal. Disulfide bonds link C74-C128 and C89-C431. N-linked (GlcNAc...) asparagine glycans are attached at residues N79, N157, and N160. A helical transmembrane segment spans residues 226–246 (LMIFFMVMCIVYVLFGVLWLA). Residues 247 to 257 (WSACYWRDLLR) are Cytoplasmic-facing. Residues 258 to 278 (IQFWIGAVIFLGMFEKAVFYA) traverse the membrane as a helical segment. Topologically, residues 279–305 (EFQNIRYKGESVQNALVLAELLSAVKR) are lumenal. The chain crosses the membrane as a helical span at residues 306–322 (SLARTLVIIVSLGYGIV). Residues 323–325 (KPR) lie on the Cytoplasmic side of the membrane. A helical membrane pass occupies residues 326 to 346 (LGVTLHKVVVAGALYLLFSGM). The Lumenal segment spans residues 347-361 (EGVLRVTGAQTDLAS). Residues 362-382 (LAFIPLAFLDTALCWWIFISL) traverse the membrane as a helical segment. Over 383-403 (TQTMKLLKLRRNIVKLSLYRH) the chain is Cytoplasmic. The chain crosses the membrane as a helical span at residues 404–424 (FTNTLILAVAASIVFIIWTTM). Residues 425-437 (KFRIVTCQSDWRE) lie on the Lumenal side of the membrane. Residues 438-458 (LWVDDAIWRLLFSMILFVIMI) form a helical membrane-spanning segment. Residues 459-555 (LWRPSANNQR…ITHFERSKME (97 aa)) are Cytoplasmic-facing. The disordered stretch occupies residues 491–515 (SFEGMKMRSTKQEPNGTSKVNKAQE). Residues 502 to 511 (QEPNGTSKVN) are compositionally biased toward polar residues. S540 carries the post-translational modification Phosphoserine.

Belongs to the LU7TM family. TMEM87 subfamily. As to quaternary structure, may interact with STOML3; STOML3 potentiates the mechanosensitive ion channel activity associated with TMEM87A. As to expression, highly expressed in sensory neurons responsive to mechanical force.

It is found in the cell membrane. It localises to the golgi apparatus membrane. Its subcellular location is the cell projection. The protein resides in the ruffle. Functionally, potential monoatomic ion channel gated by mechanical force, implicated in normal touch sensitivity through the generation of mechanically activated currents. However, a direct channel activity is debated and an alternative could be that it functions as a chaperone for an unidentified mechanosensitive ion channel. Could also be involved in cell mechanosensitivity regulating cell adhesion and migration. May also be involved in retrograde transport from endosomes to the trans-Golgi network (TGN). This Mus musculus (Mouse) protein is Transmembrane protein 87A.